We begin with the raw amino-acid sequence, 253 residues long: MAGHSKWANIKRQKARVDAKKAQVFARLSRAMIVAARQGLPDPAANFQLRTAIEKAKAAGIPNDNIERAIAKGAGTLSGDGRQFESVRYEGYGPSGIAILIEALTDNRNRTAANLRAAFSKQGGNLGETGCVSWMFRQRGVVQLTGAIAEADLLEALLDLPAESYDLDESGAIVYCSIADLEALSTQLRQLGYPVEDSELRWIPNDYQLVTDGEQARSLLRLLDTLETLEDVCSVTANLELPPELVTALEATL.

The protein belongs to the TACO1 family.

It localises to the cytoplasm. The chain is Probable transcriptional regulatory protein Synpcc7942_1017 from Synechococcus elongatus (strain ATCC 33912 / PCC 7942 / FACHB-805) (Anacystis nidulans R2).